The sequence spans 153 residues: Large ribosomal subunit protein uL30 (153 aa).

The protein belongs to the universal ribosomal protein uL30 family. In terms of assembly, part of the 50S ribosomal subunit.

In Methanosarcina mazei (strain ATCC BAA-159 / DSM 3647 / Goe1 / Go1 / JCM 11833 / OCM 88) (Methanosarcina frisia), this protein is Large ribosomal subunit protein uL30.